The following is a 418-amino-acid chain: Homocitrate synthase, mitochondrial (418 aa).

Residues 1-10 show a composition bias toward polar residues; the sequence is MSVSEANGTE. The segment at 1–25 is disordered; it reads MSVSEANGTETIKPPMNGNPYGPNP. The span at 14–25 shows a compositional bias: low complexity; that stretch reads PPMNGNPYGPNP. One can recognise a Pyruvate carboxyltransferase domain in the interval 35–288; it reads FSIIESTLRE…THKYKLNQLR (254 aa). Residues R43, E44, and H103 each contribute to the 2-oxoglutarate site. E44 serves as a coordination point for L-lysine. E44 is a binding site for Zn(2+). D123 contributes to the L-lysine binding site. 2-oxoglutarate-binding residues include R163, S165, T197, H224, and H226. Position 197 (T197) interacts with L-lysine. H224 and H226 together coordinate Zn(2+). Residue H321 is the Proton acceptor of the active site.

This sequence belongs to the alpha-IPM synthase/homocitrate synthase family. Homocitrate synthase LYS20/LYS21 subfamily. The cofactor is Mg(2+). It depends on Mn(2+) as a cofactor. Zn(2+) is required as a cofactor. Requires Co(2+) as cofactor.

The protein localises to the mitochondrion. The catalysed reaction is acetyl-CoA + 2-oxoglutarate + H2O = (2R)-homocitrate + CoA + H(+). It participates in amino-acid biosynthesis; L-lysine biosynthesis via AAA pathway; L-alpha-aminoadipate from 2-oxoglutarate: step 1/5. With respect to regulation, the activity is controled by feedback inhibition by L-lysine, the final product of the pathway that acts as a competitive inhibitor of 2-oxoglutarate. In terms of biological role, catalyzes the aldol-type condensation of 2-oxoglutarate with acetyl-CoA to yield homocitrate, the first step of the alpha-aminoadipate (AAA) lysine biosynthesis pathway. The polypeptide is Homocitrate synthase, mitochondrial (Schizosaccharomyces pombe (strain 972 / ATCC 24843) (Fission yeast)).